A 252-amino-acid polypeptide reads, in one-letter code: Flap endonuclease Xni (252 aa).

Aspartate 105 is a Mg(2+) binding site. A 5'-3' exonuclease domain is found at 162–251 (EQYQFLDFIA…EINLKQFRVK (90 aa)). 5 residues coordinate K(+): leucine 172, alanine 173, proline 181, isoleucine 183, and isoleucine 186. The segment at 185–190 (GIGPKS) is interaction with DNA.

The protein belongs to the Xni family. Requires Mg(2+) as cofactor. K(+) serves as cofactor.

Functionally, has flap endonuclease activity. During DNA replication, flap endonucleases cleave the 5'-overhanging flap structure that is generated by displacement synthesis when DNA polymerase encounters the 5'-end of a downstream Okazaki fragment. This chain is Flap endonuclease Xni, found in Shewanella denitrificans (strain OS217 / ATCC BAA-1090 / DSM 15013).